The following is a 545-amino-acid chain: CTP synthase (545 aa).

Residues 1–266 (MITNYIFVTG…DQYICDKFNL (266 aa)) form an amidoligase domain region. Position 14 (serine 14) interacts with CTP. Residue serine 14 participates in UTP binding. ATP contacts are provided by residues 15–20 (SLGKGI) and aspartate 72. The Mg(2+) site is built by aspartate 72 and glutamate 140. Residues 147-149 (DIE), 187-192 (KTKPTQ), and lysine 223 contribute to the CTP site. UTP-binding positions include 187–192 (KTKPTQ) and lysine 223. Residue 239–241 (KDV) participates in ATP binding. The region spanning 291–542 (SIGMVGKYIE…VKSALAHHQD (252 aa)) is the Glutamine amidotransferase type-1 domain. Residue glycine 352 coordinates L-glutamine. Cysteine 379 acts as the Nucleophile; for glutamine hydrolysis in catalysis. L-glutamine-binding positions include 380-383 (LGMQ), glutamate 403, and arginine 470. Active-site residues include histidine 515 and glutamate 517.

Belongs to the CTP synthase family. As to quaternary structure, homotetramer.

The catalysed reaction is UTP + L-glutamine + ATP + H2O = CTP + L-glutamate + ADP + phosphate + 2 H(+). The enzyme catalyses L-glutamine + H2O = L-glutamate + NH4(+). It catalyses the reaction UTP + NH4(+) + ATP = CTP + ADP + phosphate + 2 H(+). It functions in the pathway pyrimidine metabolism; CTP biosynthesis via de novo pathway; CTP from UDP: step 2/2. Allosterically activated by GTP, when glutamine is the substrate; GTP has no effect on the reaction when ammonia is the substrate. The allosteric effector GTP functions by stabilizing the protein conformation that binds the tetrahedral intermediate(s) formed during glutamine hydrolysis. Inhibited by the product CTP, via allosteric rather than competitive inhibition. Its function is as follows. Catalyzes the ATP-dependent amination of UTP to CTP with either L-glutamine or ammonia as the source of nitrogen. Regulates intracellular CTP levels through interactions with the four ribonucleotide triphosphates. In Hamiltonella defensa subsp. Acyrthosiphon pisum (strain 5AT), this protein is CTP synthase.